We begin with the raw amino-acid sequence, 675 residues long: Protein REPRESSOR OF VERNALIZATION 1 (675 aa).

Residues 1–143 (MGRRRRFTQQ…DPVKVTGKGK (143 aa)) are disordered. Over residues 22 to 31 (AEPPKTAKPA) the composition is skewed to low complexity. Residues 48–70 (EEEDEDEEDELELEDEEDDEKDL) are compositionally biased toward acidic residues. The span at 71-86 (EEMRRNEEEERREETR) shows a compositional bias: basic and acidic residues. Residues 73-80 (MRRNEEEE) carry the Nuclear localization signal motif. Residues 87–96 (TRRRRGRKPK) show a composition bias toward basic residues. Residues 113–127 (SDEEEEEEVREEDST) are compositionally biased toward acidic residues. Positions 157 to 275 (NTFELEDPVL…TVAKKLWNLT (119 aa)) constitute a BAH domain. Disordered regions lie at residues 300–349 (ELPD…KPET), 493–512 (GLTPAEKTSEPEESRRLQMT), and 587–675 (LASP…ADHE). Basic and acidic residues-rich tracts occupy residues 333-346 (VSRDATGKSEHFVK), 499-512 (KTSEPEESRRLQMT), and 613-627 (KLEKQKSFTKPKPEE). In terms of domain architecture, TFIIS central spans 372-518 (YRDKWLDKLL…LQMTDARCER (147 aa)).

As to expression, expressed constitutively.

The protein resides in the nucleus. In terms of biological role, component of a grass-specific mechanism of vernalization, a process by which prolonged cold exposure provides competence to flower in daylengths longer than 12 hours. Negative regulator of flowering required for vernalization establishment by repressing VRN1 before vernalization and in the fall season. This chain is Protein REPRESSOR OF VERNALIZATION 1, found in Brachypodium distachyon (Purple false brome).